Consider the following 348-residue polypeptide: MGVTGFSAFPCCGKNSVNIVERKNDDYHHHHHPLEDNKDEDNEMGTELSSMKPPPKVDPDPVPHLEDMVTELTSTPIPETENPEQQNYRIESIKPYEEELTTTNTFKPRGFNVNSTNKEEEEVVCGHFRSTPVQTSKHLFWSNKLIQASEHSLQTALEKHHKSPGEKKSISIAQVYTECTQRPSSTQVSRTPTPTALGLADLINFASSLAVASSSNMALPNLGTMIKGTSEKAQNTSLDFCQPIQSIKFTQATQITQISSEKQDEPPEVMAHKSWTQETRNVACSYLDINESGLKKATIQGEVKFVQAPATSPELQEDKDDSVPGTKKGTPILLKIHFKLSSPQAPEK.

The span at 27–36 (YHHHHHPLED) shows a compositional bias: basic and acidic residues. A disordered region spans residues 27–61 (YHHHHHPLEDNKDEDNEMGTELSSMKPPPKVDPDP). Ser149 and Ser152 each carry phosphoserine. The segment at 308 to 329 (APATSPELQEDKDDSVPGTKKG) is disordered. Thr330 is modified (phosphothreonine).

In terms of assembly, interacts with syntaxin-1 and ACTB. Abundantly expressed in testes. Expressed in germ cells, but not in Sertoli or Leydig cells of the adult testis. Localized at the acrosomal region of the round and elongated spermatids at stages VIII-X.

This is Spermatogenesis-associated protein 32 (Spata32) from Rattus norvegicus (Rat).